Here is a 65-residue protein sequence, read N- to C-terminus: MPKMKTHRGAAKRFKVLKSGKVKRSRAYKSHLLTHKNAKRKRRLRKATYLVGADAKNIKRLLPYS.

Belongs to the bacterial ribosomal protein bL35 family.

The protein is Large ribosomal subunit protein bL35 of Thermoanaerobacter pseudethanolicus (strain ATCC 33223 / 39E) (Clostridium thermohydrosulfuricum).